Consider the following 377-residue polypeptide: Dehydrogenase/reductase SDR family member 13 (377 aa).

Positions 1–25 are cleaved as a signal peptide; the sequence is MEALLLGVGLLLGAYVLVYYNLVKA. Residues Ser-46 and Ile-48 each contribute to the NAD(+) site. Ser-170 provides a ligand contact to substrate. 3 residues coordinate NAD(+): Tyr-197, Lys-201, and Ser-232. The active-site Proton acceptor is the Tyr-197. The disordered stretch occupies residues 310 to 363; it reads LAGLGPGEDAESDEDSQPEDPGTPSSPSSPHPEEPTVSELYPSPQSSTDRSTVT. The segment covering 317-327 has biased composition (acidic residues); it reads EDAESDEDSQP. The span at 328-337 shows a compositional bias: low complexity; that stretch reads EDPGTPSSPS. The span at 352-363 shows a compositional bias: polar residues; sequence SPQSSTDRSTVT.

Belongs to the short-chain dehydrogenases/reductases (SDR) family.

It localises to the secreted. Functionally, putative oxidoreductase. In Bos taurus (Bovine), this protein is Dehydrogenase/reductase SDR family member 13 (DHRS13).